The sequence spans 1022 residues: Antigenic heat-stable 120 kDa protein (1022 aa).

2 disordered regions span residues 1 to 41 and 355 to 403; these read MSKD…QTTT and GQSK…PQSQ. The segment covering 19 to 34 has biased composition (basic and acidic residues); that stretch reads EYTEEQKQTLEQEQKE. Polar residues-rich tracts occupy residues 355-380 and 387-403; these read GQSKEQPLITPQQTTSSSVEPPQYKQ and PTNQPLQPETSQMPQSQ.

It localises to the cytoplasm. This chain is Antigenic heat-stable 120 kDa protein (sca4), found in Rickettsia conorii (strain ATCC VR-613 / Malish 7).